The sequence spans 526 residues: Germ cell-less protein-like 2 (526 aa).

A disordered region spans residues 1-85 (MGSSSSRVLG…DKQQPLLNTP (85 aa)). The short motif at 49–55 (SHKRKRS) is the Nuclear localization signal element. Residues 62-77 (CDPDSHREEHEEEGDK) are compositionally biased toward basic and acidic residues. The Nuclear localization signal signature appears at 85–91 (PARKKLR). Residues 108–178 (SDIKICALGE…LYRDDVLIKP (71 aa)) enclose the BTB domain.

Interacts with CUL3. As to expression, expressed predominantly in testis.

The protein localises to the nucleus matrix. The protein operates within protein modification; protein ubiquitination. Possible function in spermatogenesis. Probable substrate-specific adapter of an E3 ubiquitin-protein ligase complex which mediates the ubiquitination and subsequent proteasomal degradation of target proteins. In Homo sapiens (Human), this protein is Germ cell-less protein-like 2.